We begin with the raw amino-acid sequence, 80 residues long: Cytochrome c oxidase subunit 7B, mitochondrial (80 aa).

A mitochondrion-targeting transit peptide spans 1–24 (MFPLVKSALNRLQVRSIQQTMARQ). Residues 25-32 (SHQKRTPD) are Mitochondrial matrix-facing. A helical transmembrane segment spans residues 33 to 59 (FHDKYGNAVLASGATFCIVTWTYVATQ). At 60–80 (VGIEWNLSPVGRVTPKEWRNQ) the chain is on the mitochondrial intermembrane side.

The protein belongs to the cytochrome c oxidase VIIb family. As to quaternary structure, component of the cytochrome c oxidase (complex IV, CIV), a multisubunit enzyme composed of 14 subunits. The complex is composed of a catalytic core of 3 subunits MT-CO1, MT-CO2 and MT-CO3, encoded in the mitochondrial DNA, and 11 supernumerary subunits COX4I1 (or COX4I2), COX5A, COX5B, COX6A1 (or COX6A2), COX6B1 (or COX6B2), COX6C, COX7A2 (or COX7A1), COX7B, COX7C, COX8A and NDUFA4, which are encoded in the nuclear genome. The complex exists as a monomer or a dimer and forms supercomplexes (SCs) in the inner mitochondrial membrane with NADH-ubiquinone oxidoreductase (complex I, CI) and ubiquinol-cytochrome c oxidoreductase (cytochrome b-c1 complex, complex III, CIII), resulting in different assemblies (supercomplex SCI(1)III(2)IV(1) and megacomplex MCI(2)III(2)IV(2)).

It localises to the mitochondrion inner membrane. It participates in energy metabolism; oxidative phosphorylation. Component of the cytochrome c oxidase, the last enzyme in the mitochondrial electron transport chain which drives oxidative phosphorylation. The respiratory chain contains 3 multisubunit complexes succinate dehydrogenase (complex II, CII), ubiquinol-cytochrome c oxidoreductase (cytochrome b-c1 complex, complex III, CIII) and cytochrome c oxidase (complex IV, CIV), that cooperate to transfer electrons derived from NADH and succinate to molecular oxygen, creating an electrochemical gradient over the inner membrane that drives transmembrane transport and the ATP synthase. Cytochrome c oxidase is the component of the respiratory chain that catalyzes the reduction of oxygen to water. Electrons originating from reduced cytochrome c in the intermembrane space (IMS) are transferred via the dinuclear copper A center (CU(A)) of subunit 2 and heme A of subunit 1 to the active site in subunit 1, a binuclear center (BNC) formed by heme A3 and copper B (CU(B)). The BNC reduces molecular oxygen to 2 water molecules using 4 electrons from cytochrome c in the IMS and 4 protons from the mitochondrial matrix. Plays a role in proper central nervous system (CNS) development in vertebrates. This chain is Cytochrome c oxidase subunit 7B, mitochondrial (COX7B), found in Homo sapiens (Human).